The primary structure comprises 193 residues: Acyl-homoserine-lactone synthase (193 aa).

Belongs to the autoinducer synthase family.

The catalysed reaction is a fatty acyl-[ACP] + S-adenosyl-L-methionine = an N-acyl-L-homoserine lactone + S-methyl-5'-thioadenosine + holo-[ACP] + H(+). Required for the synthesis of OHHL (N-(3-oxohexanoyl)-L-homoserine lactone) also known as VAI or N-(beta-ketocaproyl)homoserine lactone or 3-oxo-N-(tetrahydro-2-oxo-3-furanyl)-hexanamide, an autoinducer molecule which binds to LuxR and thus acts in bioluminescence regulation. The chain is Acyl-homoserine-lactone synthase (luxI) from Aliivibrio fischeri (Vibrio fischeri).